The chain runs to 220 residues: Grancalcin (220 aa).

EF-hand domains follow at residues 51–86 (SPAD…SGIS), 92–127 (FSLE…LNAW), 122–157 (AALN…MGYR), and 158–193 (LSPQ…ALTD). Ca(2+)-binding residues include aspartate 105, aspartate 107, threonine 109, lysine 111, glutamate 116, aspartate 135, aspartate 137, serine 139, threonine 141, and glutamate 146.

As to quaternary structure, homodimer. Interacts with SRI and LCP1.

It is found in the cytoplasm. The protein resides in the cytoplasmic granule membrane. In terms of biological role, calcium-binding protein that may play a role in the adhesion of neutrophils to fibronectin. May play a role in the formation of focal adhesions. The chain is Grancalcin (Gca) from Mus musculus (Mouse).